The primary structure comprises 353 residues: MPEQFAVPRSVEWEETSVKILNQQKLPEKTEYLHLTTKEDIYDAIQTLKVRGAPAIGITAAFGLALCAQSIDTSDVSAFLRELRKIKDELNQARPTAVNLSWALNRLLKSAEGAKSVNEAKTNLVHEAIQIQVEDEETCRQIGQNALHLFKSGDSIMTICNAGSIATSRYGTALSPFYLAKTKDLDLHIYACETRPVLQGARLTAWELMQGGIDVTLITDSMAAHTMKEKNISAVIVGADRIARNGDTANKIGTFGLAILAKAFQIPFFIAAPLSTFDVSISCGDDIPIEERDPDEVRRINGTQIAPQEVPVFNPAFDITPHDLISGIITEKGIITDRFEEEIEALFSAEALT.

Residues 51–53 (RGA), R94, and Q199 each bind substrate. D240 serves as the catalytic Proton donor. 250-251 (NK) contributes to the substrate binding site.

It belongs to the eIF-2B alpha/beta/delta subunits family. MtnA subfamily. In terms of assembly, homodimer.

It catalyses the reaction 5-(methylsulfanyl)-alpha-D-ribose 1-phosphate = 5-(methylsulfanyl)-D-ribulose 1-phosphate. It participates in amino-acid biosynthesis; L-methionine biosynthesis via salvage pathway; L-methionine from S-methyl-5-thio-alpha-D-ribose 1-phosphate: step 1/6. Catalyzes the interconversion of methylthioribose-1-phosphate (MTR-1-P) into methylthioribulose-1-phosphate (MTRu-1-P). This is Methylthioribose-1-phosphate isomerase from Bacillus licheniformis (strain ATCC 14580 / DSM 13 / JCM 2505 / CCUG 7422 / NBRC 12200 / NCIMB 9375 / NCTC 10341 / NRRL NRS-1264 / Gibson 46).